The chain runs to 272 residues: MATYIVGDLHGCFDEFQLLLEQANFDPQYDELWLTGDLVARGENSLACLRYVKALGERATVVLGNHDVHLLSTLQGIKAVKPKDKVDAIFEAEDRLELQNWLRSRPLVAQHPVHQFLLVHAGVSPEWDLATTLACAREVEAVLQGEQFADFLAQMYGNSPDQWRADLQGIERWRYALNVFTRMRFCYADKRLDFDCKLPVEEAPEGLKPWFELDNPFYRQQPIIFGHWASLIGYQTPDTIYALDTGCVWGNHLTMLRWEDKHIFTQKRLNLD.

Belongs to the Ap4A hydrolase family.

It catalyses the reaction P(1),P(4)-bis(5'-adenosyl) tetraphosphate + H2O = 2 ADP + 2 H(+). Hydrolyzes diadenosine 5',5'''-P1,P4-tetraphosphate to yield ADP. This Glaesserella parasuis serovar 5 (strain SH0165) (Haemophilus parasuis) protein is Bis(5'-nucleosyl)-tetraphosphatase, symmetrical.